The sequence spans 1972 residues: MAQKGQLSDDEKFLFVDKNFINSPVAQADWAAKRLVWVPSEKQGFEAASIKEEKGDEVVVELVENGKKVTVGKDDIQKMNPPKFSKVEDMAELTCLNEASVLHNLRERYFSGLIYTYSGLFCVVVNPYKHLPIYSEKIVDMYKGKKRHEMPPHIYAIADTAYRSMLQDREDQSILCTGESGAGKTENTKKVIQYLAVVASSHKGKKDTSITGELEKQLLQANPILEAFGNAKTVKNDNSSRFGKFIRINFDVTGYIVGANIETYLLEKSRAIRQARDERTFHIFYYMIAGAKEKMRSDLLLEGFNNYTFLSNGFVPIPAAQDDEMFQETVEAMAIMGFSEEEQLSILKVVSSVLQLGNIVFKKERNTDQASMPDNTAAQKVCHLMGINVTDFTRSILTPRIKVGRDVVQKAQTKEQADFAVEALAKATYERLFRWILTRVNKALDKTHRQGASFLGILDIAGFEIFEVNSFEQLCINYTNEKLQQLFNHTMFILEQEEYQREGIEWNFIDFGLDLQPCIELIERPNNPPGVLALLDEECWFPKATDKSFVEKLCTEQGSHPKFQKPKQLKDKTEFSIIHYAGKVDYNASAWLTKNMDPLNDNVTSLLNASSDKFVADLWKDVDRIVGLDQMAKMTESSLPSASKTKKGMFRTVGQLYKEQLGKLMTTLRNTTPNFVRCIIPNHEKRSGKLDAFLVLEQLRCNGVLEGIRICRQGFPNRIVFQEFRQRYEILAANAIPKGFMDGKQACILMIKALELDPNLYRIGQSKIFFRTGVLAHLEEERDLKITDVIMAFQAMCRGYLARKAFAKRQQQLTAMKVIQRNCAAYLKLRNWQWWRLFTKVKPLLQVTRQEEEMQAKEDELQKTKERQQKAENELKELEQKHSQLTEEKNLLQEQLQAETELYAEAEEMRVRLAAKKQELEEILHEMEARLEEEEDRGQQLQAERKKMAQQMLDLEEQLEEEEAARQKLQLEKVTAEAKIKKLEDEILVMDDQNNKLSKERKLLEERISDLTTNLAEEEEKAKNLTKLKNKHESMISELEVRLKKEEKSRQELEKLKRKLEGDASDFHEQIADLQAQIAELKMQLAKKEEELQAALARLDDEIAQKNNALKKIRELEGHISDLQEDLDSERAARNKAEKQKRDLGEELEALKTELEDTLDSTATQQELRAKREQEVTVLKKALDEETRSHEAQVQEMRQKHAQAVEELTEQLEQFKRAKANLDKNKQTLEKENADLAGELRVLGQAKQEVEHKKKKLEAQVQELQSKCSDGERARAELNDKVHKLQNEVESVTGMLNEAEGKAIKLAKDVASLSSQLQDTQELLQEETRQKLNVSTKLRQLEEERNSLQDQLDEEMEAKQNLERHISTLNIQLSDSKKKLQDFASTVEALEEGKKRFQKEIENLTQQYEEKAAAYDKLEKTKNRLQQELDDLVVDLDNQRQLVSNLEKKQRKFDQLLAEEKNISSKYADERDRAEAEAREKETKALSLARALEEALEAKEELERTNKMLKAEMEDLVSSKDDVGKNVHELEKSKRALETQMEEMKTQLEELEDELQATEDAKLRLEVNMQALKGQFERDLQARDEQNEEKRRQLQRQLHEYETELEDERKQRALAAAAKKKLEGDLKDLELQADSAIKGREEAIKQLRKLQAQMKDFQRELEDARASRDEIFATAKENEKKAKSLEADLMQLQEDLAAAERARKQADLEKEELAEELASSLSGRNALQDEKRRLEARIAQLEEELEEEQGNMEAMSDRVRKATQQAEQLSNELATERSTAQKNESARQQLERQNKELRSKLHEMEGAVKSKFKSTIAALEAKIAQLEEQVEQEAREKQAATKSLKQKDKKLKEILLQVEDERKMAEQYKEQAEKGNARVKQLKRQLEEAEEESQRINANRRKLQRELDEATESNEAMGREVNALKSKLRRGNETSFVPSRRSGGRRVIENADGSEEETDTRDADFNGTKASE.

Serine 8, serine 23, and serine 40 each carry phosphoserine. One can recognise a Myosin N-terminal SH3-like domain in the interval 31–81 (AAKRLVWVPSEKQGFEAASIKEEKGDEVVVELVENGKKVTVGKDDIQKMNP). A Myosin motor domain is found at 85–783 (SKVEDMAELT…VLAHLEEERD (699 aa)). Lysine 129 is modified (N6,N6,N6-trimethyllysine). 178-185 (GESGAGKT) contacts ATP. Actin-binding regions lie at residues 661 to 683 (LGKL…IPNH) and 762 to 776 (RIGQ…GVLA). The 30-residue stretch at 786 to 815 (ITDVIMAFQAMCRGYLARKAFAKRQQQLTA) folds into the IQ domain. Positions 844-1934 (LLQVTRQEEE…KSKLRRGNET (1091 aa)) form a coiled coil. Positions 858 to 882 (EDELQKTKERQQKAENELKELEQKH) are disordered. Threonine 1177 bears the Phosphothreonine mark. Phosphoserine is present on residues serine 1684 and serine 1722. Disordered stretches follow at residues 1744-1800 (ELEE…LRSK) and 1866-1972 (EQYK…KASE). Polar residues predominate over residues 1762-1788 (ATQQAEQLSNELATERSTAQKNESARQ). Composition is skewed to basic and acidic residues over residues 1789 to 1800 (QLERQNKELRSK) and 1866 to 1876 (EQYKEQAEKGN). A C-terminal region spans residues 1935-1972 (SFVPSRRSGGRRVIENADGSEEETDTRDADFNGTKASE). Position 1954 is a phosphoserine (serine 1954). Residue threonine 1958 is modified to Phosphothreonine. Phosphoserine is present on serine 1971.

Belongs to the TRAFAC class myosin-kinesin ATPase superfamily. Myosin family. In terms of assembly, muscle myosin is a hexameric protein that consists of 2 heavy chain subunits (MHC), 2 alkali light chain subunits (MLC) and 2 regulatory light chain subunits (MLC-2). Smooth muscle; expressed in the umbilical artery, bladder, esophagus and trachea. Isoform 1 is mostly found in slowly contracting tonic muscles.

Its subcellular location is the melanosome. Functionally, muscle contraction. This Homo sapiens (Human) protein is Myosin-11 (MYH11).